Here is a 395-residue protein sequence, read N- to C-terminus: Subtilisin-like protease 5 (395 aa).

The N-terminal stretch at 1–19 (MGFLTVLYLSLAALSVTNA) is a signal peptide. Residues 20–115 (AQIMSAPNGA…VEPDAIISQH (96 aa)) constitute a propeptide that is removed on maturation. In terms of domain architecture, Inhibitor I9 spans 36–112 (YIVVMKDDTS…VAFVEPDAII (77 aa)). Residues 124–395 (PWGLSRLSNR…RRLLYNGSGR (272 aa)) enclose the Peptidase S8 domain. Active-site charge relay system residues include aspartate 155 and histidine 186. N-linked (GlcNAc...) asparagine glycans are attached at residues asparagine 229 and asparagine 247. Serine 341 functions as the Charge relay system in the catalytic mechanism. A disordered region spans residues 374–395 (QPTIHNPGPDTTRRLLYNGSGR). Asparagine 391 carries an N-linked (GlcNAc...) asparagine glycan.

The protein belongs to the peptidase S8 family.

It is found in the secreted. Secreted subtilisin-like serine protease with keratinolytic activity that contributes to pathogenicity. The sequence is that of Subtilisin-like protease 5 (SUB5) from Arthroderma otae (strain ATCC MYA-4605 / CBS 113480) (Microsporum canis).